Here is a 273-residue protein sequence, read N- to C-terminus: Rhamnulose-1-phosphate aldolase (273 aa).

The active site involves E117. Zn(2+) is bound by residues H140, H142, and H211.

The protein belongs to the aldolase class II family. RhaD subfamily. Zn(2+) is required as a cofactor.

The protein resides in the cytoplasm. It carries out the reaction L-rhamnulose 1-phosphate = (S)-lactaldehyde + dihydroxyacetone phosphate. Its pathway is carbohydrate degradation; L-rhamnose degradation; glycerone phosphate from L-rhamnose: step 3/3. Functionally, catalyzes the reversible cleavage of L-rhamnulose-1-phosphate to dihydroxyacetone phosphate (DHAP) and L-lactaldehyde. The protein is Rhamnulose-1-phosphate aldolase of Listeria monocytogenes serotype 4b (strain F2365).